Here is a 186-residue protein sequence, read N- to C-terminus: UPF0301 protein Daro_3893 (186 aa).

Belongs to the UPF0301 (AlgH) family.

This chain is UPF0301 protein Daro_3893, found in Dechloromonas aromatica (strain RCB).